The primary structure comprises 287 residues: ATP synthase gamma chain (287 aa).

The protein belongs to the ATPase gamma chain family. F-type ATPases have 2 components, CF(1) - the catalytic core - and CF(0) - the membrane proton channel. CF(1) has five subunits: alpha(3), beta(3), gamma(1), delta(1), epsilon(1). CF(0) has three main subunits: a, b and c.

The protein localises to the cell inner membrane. Functionally, produces ATP from ADP in the presence of a proton gradient across the membrane. The gamma chain is believed to be important in regulating ATPase activity and the flow of protons through the CF(0) complex. The polypeptide is ATP synthase gamma chain (Xanthomonas campestris pv. campestris (strain B100)).